The chain runs to 254 residues: MTTAALKRDEILLLFDVDGTLTMPRSVVTPEFEEFFYSRVKPRATIGIVGGSDLEKMFEQLNGRKILNEFDFIFPENGLVQIEGGKEVGKQNIIMHLGEETVKRFINFVLRYLSELDVPIKRGTFIEFRNGMMNVCPIGRQCTREERNMFAEYDIEHKVREKMIKDLKQEFADVDLTYSIGGQISFDVFPHGWDKTYCLRHIEAHYKFKEIHFFGDKTEPGGNDYEIYSDPRTISHRVYTPKDTQRILTEILEL.

D16 acts as the Nucleophile in catalysis. Mg(2+) is bound by residues D16 and D18. D18 serves as the catalytic Proton donor/acceptor. R25, R129, R140, R147, S185, and D187 together coordinate alpha-D-mannose 1-phosphate. Residues D216, Y228, D230, and T233 each contribute to the Mg(2+) site.

This sequence belongs to the eukaryotic PMM family. As to quaternary structure, homodimer.

It localises to the cytoplasm. It catalyses the reaction alpha-D-mannose 1-phosphate = D-mannose 6-phosphate. The protein operates within nucleotide-sugar biosynthesis; GDP-alpha-D-mannose biosynthesis; alpha-D-mannose 1-phosphate from D-fructose 6-phosphate: step 2/2. In terms of biological role, involved in the synthesis of the GDP-mannose and dolichol-phosphate-mannose required for a number of critical mannosyl transfer reactions. Required for maintaining N-linked glycoprotein glycosylation at the neuromuscular junction (NMJ) synaptomatrix, and thus acts in multiple pathways that prevent NMJ structural overgrowth, restrict synaptic bouton differentiation, and limit NMJ neurotransmission strength, in order to maintain viability, coordinate movement, and in adults ensure correct wing positioning. Acts in the NMJ trans-synaptic Wg pathway via glycosylation of synaptic Mmp2 which enables dlp/wg signaling during development. The protein is Phosphomannomutase of Drosophila melanogaster (Fruit fly).